The primary structure comprises 184 residues: ATP synthase subunit b, chloroplastic (184 aa).

Residues 27 to 49 (LATNPINLSVVLGVLIFFGKGVL) traverse the membrane as a helical segment.

Belongs to the ATPase B chain family. As to quaternary structure, F-type ATPases have 2 components, F(1) - the catalytic core - and F(0) - the membrane proton channel. F(1) has five subunits: alpha(3), beta(3), gamma(1), delta(1), epsilon(1). F(0) has four main subunits: a(1), b(1), b'(1) and c(10-14). The alpha and beta chains form an alternating ring which encloses part of the gamma chain. F(1) is attached to F(0) by a central stalk formed by the gamma and epsilon chains, while a peripheral stalk is formed by the delta, b and b' chains.

It is found in the plastid. The protein resides in the chloroplast thylakoid membrane. Functionally, f(1)F(0) ATP synthase produces ATP from ADP in the presence of a proton or sodium gradient. F-type ATPases consist of two structural domains, F(1) containing the extramembraneous catalytic core and F(0) containing the membrane proton channel, linked together by a central stalk and a peripheral stalk. During catalysis, ATP synthesis in the catalytic domain of F(1) is coupled via a rotary mechanism of the central stalk subunits to proton translocation. Its function is as follows. Component of the F(0) channel, it forms part of the peripheral stalk, linking F(1) to F(0). The chain is ATP synthase subunit b, chloroplastic from Oenothera elata subsp. hookeri (Hooker's evening primrose).